A 634-amino-acid polypeptide reads, in one-letter code: DNA-directed RNA polymerase subunit gamma (634 aa).

Residues Cys-74, Cys-76, Cys-89, and Cys-92 each contribute to the Zn(2+) site. Residues Asp-471, Asp-473, and Asp-475 each contribute to the Mg(2+) site.

It belongs to the RNA polymerase beta' chain family. RpoC1 subfamily. As to quaternary structure, in cyanobacteria the RNAP catalytic core is composed of 2 alpha, 1 beta, 1 beta', 1 gamma and 1 omega subunit. When a sigma factor is associated with the core the holoenzyme is formed, which can initiate transcription. It depends on Mg(2+) as a cofactor. Zn(2+) serves as cofactor.

It catalyses the reaction RNA(n) + a ribonucleoside 5'-triphosphate = RNA(n+1) + diphosphate. DNA-dependent RNA polymerase catalyzes the transcription of DNA into RNA using the four ribonucleoside triphosphates as substrates. The chain is DNA-directed RNA polymerase subunit gamma from Prochlorococcus marinus (strain MIT 9515).